The chain runs to 855 residues: Potassium channel AKT2 (855 aa).

Over residues 1-12 (MKTSSFESASSS) the composition is skewed to low complexity. The interval 1 to 24 (MKTSSFESASSSGGSGGGGGGGGG) is disordered. Over 1–75 (MKTSSFESAS…PLDSRYRCWD (75 aa)) the chain is Cytoplasmic. Positions 13-24 (GGSGGGGGGGGG) are enriched in gly residues. The helical transmembrane segment at 76-96 (TFMVVLVAYSAWVYPFEVAFM) threads the bilayer. Topologically, residues 97–105 (NASPKGGLE) are extracellular. The helical transmembrane segment at 106–126 (VADIVVDLFFAVDIVLTFFVA) threads the bilayer. The Cytoplasmic portion of the chain corresponds to 127–149 (YIDSRTQLLVRDRRRIATRYLST). A helical membrane pass occupies residues 150–170 (FFIMDVASTIPFQGLAYIVTG). The Extracellular segment spans residues 171–179 (EVRESPAFS). The helical; Voltage-sensor transmembrane segment at 180–200 (LLGILRLWRLRKVKQFFTRLE) threads the bilayer. Residues 201 to 214 (KDIRFNYFWIRCAR) are Cytoplasmic-facing. Residues 215 to 235 (LIAVTLFLVHCAGCLYYLIAD) traverse the membrane as a helical segment. The Extracellular segment spans residues 236–262 (RYPHREKTWIGAVIPDFQEASLWIRYT). The pore-forming intramembrane region spans 263–282 (SSVYWSITTMTTVGYGDMHA). Over 283-285 (QNT) the chain is Extracellular. A helical transmembrane segment spans residues 286–306 (VEMIFNIFYMLFNLGLTAYLI). The Cytoplasmic portion of the chain corresponds to 307 to 855 (GNMTNLVVEG…VASMDSVSGS (549 aa)). An a nucleoside 3',5'-cyclic phosphate-binding site is contributed by 391–511 (LFKGVSREVL…VVIIKNFLKH (121 aa)). ANK repeat units lie at residues 536 to 565 (NIPC…DPDV), 569 to 598 (KGRT…NVNI), 602 to 631 (QGNT…VSSP), 634 to 663 (AAGD…AVDS), and 667 to 696 (DGAT…SVDR). Residues 744–765 (EVGSSGDSRNGRRQSARSDGAH) are disordered. Residues 768–855 (RVSIYRGHPF…VASMDSVSGS (88 aa)) enclose the KHA domain.

This sequence belongs to the potassium channel family. Plant (TC 1.A.1.4) subfamily. The potassium channel is probably a homo- or heterotetrameric complex of pore-forming subunits.

It is found in the membrane. Functionally, probable inward-rectifying potassium channel. Assuming opened or closed conformations in response to the voltage difference across the membrane, the channel is activated by hyperpolarization. The sequence is that of Potassium channel AKT2 from Oryza sativa subsp. japonica (Rice).